A 406-amino-acid chain; its full sequence is Inactive serine protease 35 (406 aa).

A signal peptide spans 1-17 (MLLWLIIFVSGWTLSLG). Residue Asn87 is glycosylated (N-linked (GlcNAc...) asparagine). The region spanning 121-401 (VYGTDSRFSI…ICLWIHGNAA (281 aa)) is the Peptidase S1 domain. A disulfide bridge connects residues Cys151 and Cys167. A compositionally biased stretch (basic residues) spans 186–204 (LKMRNKGGRKKRRGSRRSR). A disordered region spans residues 186–248 (LKMRNKGGRK…RPSFQWTRVK (63 aa)).

Belongs to the peptidase S1 family.

The protein localises to the secreted. This Rattus norvegicus (Rat) protein is Inactive serine protease 35 (Prss35).